We begin with the raw amino-acid sequence, 549 residues long: Chaperonin GroEL 2 (549 aa).

ATP contacts are provided by residues 29–32 (TLGP), Lys-50, 86–90 (DGTTT), Gly-414, 477–479 (NAA), and Asp-493.

Belongs to the chaperonin (HSP60) family. In terms of assembly, forms a cylinder of 14 subunits composed of two heptameric rings stacked back-to-back. Interacts with the co-chaperonin GroES.

It localises to the cytoplasm. The enzyme catalyses ATP + H2O + a folded polypeptide = ADP + phosphate + an unfolded polypeptide.. Functionally, together with its co-chaperonin GroES, plays an essential role in assisting protein folding. The GroEL-GroES system forms a nano-cage that allows encapsulation of the non-native substrate proteins and provides a physical environment optimized to promote and accelerate protein folding. The protein is Chaperonin GroEL 2 of Myxococcus xanthus (strain DK1622).